The chain runs to 671 residues: DNA ligase (671 aa).

Residues 32–36 (DAEYD), 81–82 (SL), and E113 each bind NAD(+). The N6-AMP-lysine intermediate role is filled by K115. Residues R136, E173, K290, and K314 each contribute to the NAD(+) site. Residues C408, C411, C426, and C432 each contribute to the Zn(2+) site. Residues 593-671 (EIDSPFAGKT…ETEMLRLLGS (79 aa)) form the BRCT domain.

This sequence belongs to the NAD-dependent DNA ligase family. LigA subfamily. Mg(2+) is required as a cofactor. Mn(2+) serves as cofactor.

It carries out the reaction NAD(+) + (deoxyribonucleotide)n-3'-hydroxyl + 5'-phospho-(deoxyribonucleotide)m = (deoxyribonucleotide)n+m + AMP + beta-nicotinamide D-nucleotide.. DNA ligase that catalyzes the formation of phosphodiester linkages between 5'-phosphoryl and 3'-hydroxyl groups in double-stranded DNA using NAD as a coenzyme and as the energy source for the reaction. It is essential for DNA replication and repair of damaged DNA. In Escherichia fergusonii (strain ATCC 35469 / DSM 13698 / CCUG 18766 / IAM 14443 / JCM 21226 / LMG 7866 / NBRC 102419 / NCTC 12128 / CDC 0568-73), this protein is DNA ligase.